The chain runs to 90 residues: Cell division topological specificity factor (90 aa).

This sequence belongs to the MinE family.

Prevents the cell division inhibition by proteins MinC and MinD at internal division sites while permitting inhibition at polar sites. This ensures cell division at the proper site by restricting the formation of a division septum at the midpoint of the long axis of the cell. In Clostridium perfringens (strain ATCC 13124 / DSM 756 / JCM 1290 / NCIMB 6125 / NCTC 8237 / Type A), this protein is Cell division topological specificity factor.